Here is a 586-residue protein sequence, read N- to C-terminus: Malonate--CoA ligase ACSF3, mitochondrial (586 aa).

Residues 1 to 89 (MPLPYVGMAL…SREICQLRAC (89 aa)) constitute a mitochondrion transit peptide. ATP contacts are provided by residues 203 to 211 (TSGTTGRPK), aspartate 457, arginine 471, and lysine 563.

Belongs to the ATP-dependent AMP-binding enzyme family.

It is found in the mitochondrion. The enzyme catalyses tetracosanoate + ATP + CoA = tetracosanoyl-CoA + AMP + diphosphate. It carries out the reaction malonate + ATP + CoA = malonyl-CoA + AMP + diphosphate. Catalyzes the initial reaction in intramitochondrial fatty acid synthesis, by activating malonate and methylmalonate, but not acetate, into their respective CoA thioester. May have some preference toward very-long-chain substrates. The chain is Malonate--CoA ligase ACSF3, mitochondrial from Bos taurus (Bovine).